Here is a 199-residue protein sequence, read N- to C-terminus: ATP-dependent Clp protease proteolytic subunit (199 aa).

Ser-98 acts as the Nucleophile in catalysis. His-123 is an active-site residue.

Belongs to the peptidase S14 family. In terms of assembly, fourteen ClpP subunits assemble into 2 heptameric rings which stack back to back to give a disk-like structure with a central cavity, resembling the structure of eukaryotic proteasomes.

It localises to the cytoplasm. It catalyses the reaction Hydrolysis of proteins to small peptides in the presence of ATP and magnesium. alpha-casein is the usual test substrate. In the absence of ATP, only oligopeptides shorter than five residues are hydrolyzed (such as succinyl-Leu-Tyr-|-NHMec, and Leu-Tyr-Leu-|-Tyr-Trp, in which cleavage of the -Tyr-|-Leu- and -Tyr-|-Trp bonds also occurs).. Functionally, cleaves peptides in various proteins in a process that requires ATP hydrolysis. Has a chymotrypsin-like activity. Plays a major role in the degradation of misfolded proteins. The sequence is that of ATP-dependent Clp protease proteolytic subunit from Ehrlichia chaffeensis (strain ATCC CRL-10679 / Arkansas).